The sequence spans 271 residues: Inactive phospholipid phosphatase 7 (271 aa).

Positions 1–66 (MPASQSRARA…RERRQSQQLP (66 aa)) are disordered. Residues 1–112 (MPASQSRARA…AASWASARSM (112 aa)) are Cytoplasmic-facing. Phosphoserine is present on residues S43 and S62. The interval 70–91 (CMQLNPSFKGIAFNSLLAIDIC) is interaction with MTOR. Residues 113 to 133 (VKLIGITGHGIPWIGGTILCL) traverse the membrane as a helical segment. Topologically, residues 134-141 (VKSSTLAG) are extracellular. A helical membrane pass occupies residues 142 to 162 (QEVLMNLLLALLLDIMTVAGV). At 163–202 (QKLIKRRGPYETSPSLLDYLTMDIYAFPAGHASRAAMVSK) the chain is on the cytoplasmic side. Residues 203–223 (FFLSHLVLAVPLRVLLVLWAL) form a helical membrane-spanning segment. The Extracellular portion of the chain corresponds to 224–239 (CVGLSRVMIGRHHVTD). A helical transmembrane segment spans residues 240–260 (VLSGFVIGYLQFRLVELVWMP). Over 261 to 271 (SSTCQMLISAW) the chain is Cytoplasmic.

Belongs to the PA-phosphatase related phosphoesterase family. Homo and heterooligomer. Interacts with MTOR; controls MTOR-dependent IGF2 expression during myoblast differentiation.

The protein resides in the nucleus envelope. It localises to the endoplasmic reticulum membrane. The protein localises to the membrane. Functionally, plays a role as negative regulator of myoblast differentiation, in part through effects on MTOR signaling. Has no detectable enzymatic activity. The polypeptide is Inactive phospholipid phosphatase 7 (Homo sapiens (Human)).